Consider the following 412-residue polypeptide: Phosphatidylinositol 3,4,5-trisphosphate 3-phosphatase and protein-tyrosine-phosphatase PTEN1 (412 aa).

The 170-residue stretch at 42–211 folds into the Phosphatase tensin-type domain; it reads RRLIIGGYDL…KYWSDLLSFS (170 aa). Catalysis depends on C152, which acts as the Phosphocysteine intermediate. The 158-residue stretch at 239–396 folds into the C2 tensin-type domain; sequence VDSVFFVVSE…FSLELLFGPA (158 aa).

The protein belongs to the PTEN phosphatase protein family. As to expression, expressed exclusively in pollen grains during the late stage of development (at protein level).

It catalyses the reaction O-phospho-L-tyrosyl-[protein] + H2O = L-tyrosyl-[protein] + phosphate. The catalysed reaction is a 1,2-diacyl-sn-glycero-3-phospho-(1D-myo-inositol-3,4,5-trisphosphate) + H2O = a 1,2-diacyl-sn-glycero-3-phospho-(1D-myo-inositol-4,5-bisphosphate) + phosphate. Inhibited by vanadate. Protein tyrosine phosphatase that also exhibits lipid phosphatase activity. Can use phosphatidylinositol substrates such as PtdIns(3,4,5)P(3) as substrate. Pollen-specific phosphatase required for pollen development. In Arabidopsis thaliana (Mouse-ear cress), this protein is Phosphatidylinositol 3,4,5-trisphosphate 3-phosphatase and protein-tyrosine-phosphatase PTEN1.